Consider the following 211-residue polypeptide: SOSS complex subunit B1 (211 aa).

The segment at residues 22-92 (IVLETGRVTK…TLYTGRGGDL (71 aa)) is a DNA-binding region (OB). The interval 110–211 (EPNPEYSAQQ…GKETRRSSKR (102 aa)) is disordered. The segment covering 115–128 (YSAQQAPNKTVQND) has biased composition (polar residues). 2 stretches are compositionally biased toward pro residues: residues 133–143 (APQPPTGPPAT) and 165–174 (PHPPHTPSHP).

The protein belongs to the SOSS-B family. SOSS-B1 subfamily. In terms of assembly, component of the SOSS complex, composed of SOSS-B (SOSS-B1/NABP2 or SOSS-B2/NABP1), SOSS-A/INTS3 and SOSS-C/INIP. SOSS complexes containing SOSS-B1/NABP2 are more abundant than complexes containing SOSS-B2/NABP1. Directly interacts with ATM, SOSS-A/INTS3 and RAD51. Interacts with INTS7. In terms of processing, phosphorylated by ATM in response to DNA damage. Phosphorylation prevents degradation by the proteasome, hence stabilization of the protein and accumulation within cells. Ubiquitinated in a FBXL5-dependent manner, leading to proteasomal degradation.

The protein localises to the nucleus. In terms of biological role, component of the SOSS complex, a multiprotein complex that functions downstream of the MRN complex to promote DNA repair and G2/M checkpoint. In the SOSS complex, acts as a sensor of single-stranded DNA that binds to single-stranded DNA, in particular to polypyrimidines. The SOSS complex associates with DNA lesions and influences diverse endpoints in the cellular DNA damage response including cell-cycle checkpoint activation, recombinational repair and maintenance of genomic stability. Required for efficient homologous recombination-dependent repair of double-strand breaks (DSBs) and ATM-dependent signaling pathways. This Bos taurus (Bovine) protein is SOSS complex subunit B1 (NABP2).